The chain runs to 97 residues: Large ribosomal subunit protein eL21 (97 aa).

A disordered region spans residues 1–26 (MQKSEGFRSKTRYKLQKHPRQKGMAP). Positions 9-21 (SKTRYKLQKHPRQ) are enriched in basic residues.

The protein belongs to the eukaryotic ribosomal protein eL21 family.

This is Large ribosomal subunit protein eL21 from Methanococcus maripaludis (strain C5 / ATCC BAA-1333).